Here is an 86-residue protein sequence, read N- to C-terminus: MVKIRLTRGGAKKRPFYHIIVTDVRSARDGRNIERVGFYNPVAQGGEKRIELDLARVDHWVKNGAQPTDKVRNLIKEATKSQAAAA.

It belongs to the bacterial ribosomal protein bS16 family.

The sequence is that of Small ribosomal subunit protein bS16 from Stenotrophomonas maltophilia (strain K279a).